Consider the following 268-residue polypeptide: 4-hydroxy-tetrahydrodipicolinate reductase (268 aa).

NAD(+) is bound by residues 10-15 (GASGRM), D36, 99-101 (GTT), and 123-126 (APNM). H156 acts as the Proton donor/acceptor in catalysis. Position 157 (H157) interacts with (S)-2,3,4,5-tetrahydrodipicolinate. K160 functions as the Proton donor in the catalytic mechanism. 166–167 (GT) contacts (S)-2,3,4,5-tetrahydrodipicolinate.

The protein belongs to the DapB family.

The protein resides in the cytoplasm. It carries out the reaction (S)-2,3,4,5-tetrahydrodipicolinate + NAD(+) + H2O = (2S,4S)-4-hydroxy-2,3,4,5-tetrahydrodipicolinate + NADH + H(+). The enzyme catalyses (S)-2,3,4,5-tetrahydrodipicolinate + NADP(+) + H2O = (2S,4S)-4-hydroxy-2,3,4,5-tetrahydrodipicolinate + NADPH + H(+). It participates in amino-acid biosynthesis; L-lysine biosynthesis via DAP pathway; (S)-tetrahydrodipicolinate from L-aspartate: step 4/4. Functionally, catalyzes the conversion of 4-hydroxy-tetrahydrodipicolinate (HTPA) to tetrahydrodipicolinate. This is 4-hydroxy-tetrahydrodipicolinate reductase from Janthinobacterium sp. (strain Marseille) (Minibacterium massiliensis).